Here is a 306-residue protein sequence, read N- to C-terminus: Cysteine synthase (306 aa).

Lys-46 carries the N6-(pyridoxal phosphate)lysine modification. Pyridoxal 5'-phosphate is bound by residues Asn-76, 180 to 184 (GSGGT), and Ser-267.

Belongs to the cysteine synthase/cystathionine beta-synthase family. As to quaternary structure, homodimer. Requires pyridoxal 5'-phosphate as cofactor.

It catalyses the reaction O-acetyl-L-serine + hydrogen sulfide = L-cysteine + acetate. It functions in the pathway amino-acid biosynthesis; L-cysteine biosynthesis; L-cysteine from L-serine: step 2/2. This is Cysteine synthase (cysM) from Helicobacter pylori (strain ATCC 700392 / 26695) (Campylobacter pylori).